The following is a 309-amino-acid chain: HPr kinase/phosphorylase (309 aa).

Residues H138 and K159 contribute to the active site. G153 to S160 is a binding site for ATP. Mg(2+) is bound at residue S160. Catalysis depends on D177, which acts as the Proton acceptor; for phosphorylation activity. Proton donor; for dephosphorylation activity. The segment at L201–N210 is important for the catalytic mechanism of both phosphorylation and dephosphorylation. E202 serves as a coordination point for Mg(2+). The active site involves R243. The tract at residues P264 to R269 is important for the catalytic mechanism of dephosphorylation.

The protein belongs to the HPrK/P family. As to quaternary structure, homohexamer. Mg(2+) is required as a cofactor.

It catalyses the reaction [HPr protein]-L-serine + ATP = [HPr protein]-O-phospho-L-serine + ADP + H(+). The enzyme catalyses [HPr protein]-O-phospho-L-serine + phosphate + H(+) = [HPr protein]-L-serine + diphosphate. Catalyzes the ATP- as well as the pyrophosphate-dependent phosphorylation of a specific serine residue in HPr, a phosphocarrier protein of the phosphoenolpyruvate-dependent sugar phosphotransferase system (PTS). HprK/P also catalyzes the pyrophosphate-producing, inorganic phosphate-dependent dephosphorylation (phosphorolysis) of seryl-phosphorylated HPr (P-Ser-HPr). The two antagonistic activities of HprK/P are regulated by several intracellular metabolites, which change their concentration in response to the absence or presence of rapidly metabolisable carbon sources (glucose, fructose, etc.) in the growth medium. Also phosphorylates/dephosphorylates the HPr-like catabolite repression protein crh on a specific serine residue. Therefore, by controlling the phosphorylation state of HPr and crh, HPrK/P is a sensor enzyme that plays a major role in the regulation of carbon metabolism and sugar transport: it mediates carbon catabolite repression (CCR), and regulates PTS-catalyzed carbohydrate uptake and inducer exclusion. The sequence is that of HPr kinase/phosphorylase from Bacillus anthracis (strain A0248).